A 104-amino-acid polypeptide reads, in one-letter code: Cell division protein FtsL (104 aa).

The Cytoplasmic segment spans residues 1–20 (MSKPSLTLPRIVLHDLWQHK). The helical transmembrane segment at 21-43 (WILLLALLVLSNAVAVVYTSHVS) threads the bilayer. Over 44–104 (RKLTTEWDQL…PSEEIVVKVP (61 aa)) the chain is Periplasmic.

Belongs to the FtsL family. As to quaternary structure, part of a complex composed of FtsB, FtsL and FtsQ.

Its subcellular location is the cell inner membrane. Functionally, essential cell division protein. May link together the upstream cell division proteins, which are predominantly cytoplasmic, with the downstream cell division proteins, which are predominantly periplasmic. This chain is Cell division protein FtsL, found in Shewanella oneidensis (strain ATCC 700550 / JCM 31522 / CIP 106686 / LMG 19005 / NCIMB 14063 / MR-1).